Reading from the N-terminus, the 81-residue chain is Exodeoxyribonuclease 7 small subunit (81 aa).

Belongs to the XseB family. Heterooligomer composed of large and small subunits.

Its subcellular location is the cytoplasm. The catalysed reaction is Exonucleolytic cleavage in either 5'- to 3'- or 3'- to 5'-direction to yield nucleoside 5'-phosphates.. Bidirectionally degrades single-stranded DNA into large acid-insoluble oligonucleotides, which are then degraded further into small acid-soluble oligonucleotides. The chain is Exodeoxyribonuclease 7 small subunit from Pseudomonas syringae pv. syringae (strain B728a).